A 406-amino-acid polypeptide reads, in one-letter code: MKYPTLLDRFLVYVKENTRSDENSTTTPSTQNQVEFAQNILLPEMERIGLQNVHYLPNGFAVGTLPANDPSLTRKIGFIAHMDTADFNAEGVNPQIIENYDGNPIALGTSGYELHPKDFPQLANYHGQILITTDGTTLLGSDDKSGIAEIMTAIEFLIQNPDIKHCEIRVGFGPDEEIGVGADKFDVKDFDVDFAYTMDGGPLGELQYETFSAAGAKIDFLGRNVHPGSAKDQMINAFQMAIDFHNALPETDRPEKTEGYEGFFHLMNMEGSVDTASTTYIIRDFEEEDFQARKQLMLDIAEKMNANFDTPRVIVNLHDQYYNMKKIIEKDMTPINIAKDVMENLGIKPLIEPVRGGTDGSKISFMGIPTPNIFAGGENMHGRFEFVSLETMEKAVDVILGIVAYK.

H81 serves as a coordination point for Zn(2+). D83 is an active-site residue. Zn(2+) is bound at residue D142. E176 acts as the Proton acceptor in catalysis. Zn(2+) contacts are provided by E177, D199, and H381.

Belongs to the peptidase M20B family. Zn(2+) serves as cofactor.

The protein localises to the cytoplasm. The enzyme catalyses Release of the N-terminal residue from a tripeptide.. Cleaves the N-terminal amino acid of tripeptides. This Streptococcus suis (strain 98HAH33) protein is Peptidase T.